The sequence spans 382 residues: Proton extrusion protein PxcA (382 aa).

4 helical membrane passes run 156–176, 257–277, 305–325, and 340–360; these read TLIS…VQQV, AVKN…VCLF, IILF…TVLL, and FILL…KYWI.

It belongs to the CemA family.

The protein localises to the cell inner membrane. Its function is as follows. Required for H(+) efflux immediately after light irradiation to form a rapid H(+) concentration gradient across the thylakoid membranes. Together with PxcL, contributes to transient H(+) uptake following dark to light transition. This Synechococcus sp. (strain CC9311) protein is Proton extrusion protein PxcA.